The chain runs to 428 residues: 5'-nucleotidase domain-containing protein 4 (428 aa).

Catalysis depends on Asp22, which acts as the Nucleophile. 3 residues coordinate Mg(2+): Asp22, Asp24, and Asp317. Asp24 (proton donor) is an active-site residue.

It belongs to the 5'(3')-deoxyribonucleotidase family.

The sequence is that of 5'-nucleotidase domain-containing protein 4 (NT5DC4) from Homo sapiens (Human).